The chain runs to 641 residues: Tetracycline resistance protein TetQ (641 aa).

The 244-residue stretch at 1-244 (MNIINLGILA…AITSFILPPA (244 aa)) folds into the tr-type G domain. Residues 10-17 (AHIDAGKT), 74-78 (DTPGH), and 128-131 (NKID) each bind GTP.

Belongs to the TRAFAC class translation factor GTPase superfamily. Classic translation factor GTPase family. TetM/TetO subfamily.

Functionally, abolishes the inhibitory effect of tetracyclin on protein synthesis by a non-covalent modification of the ribosomes. The sequence is that of Tetracycline resistance protein TetQ (tetQ) from Bacteroides thetaiotaomicron.